The following is a 465-amino-acid chain: tRNA (guanine(37)-N(1))-methyltransferase (465 aa).

The transit peptide at 1–20 (MDKNSQLRDMNLFRAPAARA) directs the protein to the mitochondrion. S-adenosyl-L-methionine is bound by residues His238 and 304-305 (DG). Residues 326-345 (AVIKPPRPPRKSAAPPPEPV) form a disordered region. Residue Asn359 coordinates S-adenosyl-L-methionine.

This sequence belongs to the class I-like SAM-binding methyltransferase superfamily. TRM5/TYW2 family. Monomer.

Its subcellular location is the mitochondrion matrix. It localises to the nucleus. It is found in the cytoplasm. The enzyme catalyses guanosine(37) in tRNA + S-adenosyl-L-methionine = N(1)-methylguanosine(37) in tRNA + S-adenosyl-L-homocysteine + H(+). Its function is as follows. Specifically methylates the N1 position of guanosine-37 in various cytoplasmic and mitochondrial tRNAs. Methylation is not dependent on the nature of the nucleoside 5' of the target nucleoside. This is the first step in the biosynthesis of wybutosine (yW), a modified base adjacent to the anticodon of tRNAs and required for accurate decoding. This chain is tRNA (guanine(37)-N(1))-methyltransferase, found in Fusarium vanettenii (strain ATCC MYA-4622 / CBS 123669 / FGSC 9596 / NRRL 45880 / 77-13-4) (Fusarium solani subsp. pisi).